A 425-amino-acid chain; its full sequence is F-box/LRR-repeat protein At3g59250 (425 aa).

The F-box domain maps to 6–54 (KDKISNLPEALICHILSFLPIEDSALTSVLSKRWRYLFAFRPNLVFDDS). 5 LRR repeats span residues 86–113 (DLQVNVNGVRLPSKVFVSKSLVRLRIES), 138–163 (MLGKGEDCFEKLTSGCHVLEELVLNN), 185–210 (CTESYDKNPHSVLFDTPNLVYLKYSD), 264–293 (CLSANSLAVLTFCCESIPVFNNLIQLTIKT), and 294–319 (NQSVGWESLPALLKNCPILETLVFEG).

The polypeptide is F-box/LRR-repeat protein At3g59250 (Arabidopsis thaliana (Mouse-ear cress)).